The chain runs to 261 residues: Small ribosomal subunit protein eS1 (261 aa).

Over residues 1 to 18 the composition is skewed to basic residues; the sequence is MAVGKNKRISKGKKGGKK. A disordered region spans residues 1 to 23; that stretch reads MAVGKNKRISKGKKGGKKKAADP.

The protein belongs to the eukaryotic ribosomal protein eS1 family. In terms of assembly, component of the small ribosomal subunit. Mature ribosomes consist of a small (40S) and a large (60S) subunit. The 40S subunit contains about 33 different proteins and 1 molecule of RNA (18S). The 60S subunit contains about 49 different proteins and 3 molecules of RNA (25S, 5.8S and 5S).

Its subcellular location is the cytoplasm. This chain is Small ribosomal subunit protein eS1 (cyc07), found in Nicotiana tabacum (Common tobacco).